A 307-amino-acid chain; its full sequence is Leucine-rich repeat-containing protein 59 (307 aa).

The Cytoplasmic segment spans residues 1–247 (MARANGRSQN…LAQRQSRLRK (247 aa)). LRR repeat units lie at residues 10–31 (NLRD…SEVP), 40–61 (KATA…FCNL), 63–84 (HIVR…FGRL), 86–107 (NLQH…FAQL), and 109–131 (SLKW…AGDC). Residues 156 to 222 (EIELQRKLQL…LNSNKKAEEE (67 aa)) are a coiled coil. Residues 170–238 (KKKLEAKQRV…RMATPKEKKL (69 aa)) are disordered. Basic and acidic residues-rich tracts occupy residues 174–187 (EAKQ…EREM) and 194–238 (QQKE…EKKL). Residues 248–268 (IACILLFGLLVVLLVVVACRF) form a helical membrane-spanning segment. The Lumenal segment spans residues 269-307 (TDLKAINMCTSVNAIYKETLSALHSNPVLERFLQDPSSQ).

As to quaternary structure, interacts with SGO1.

The protein localises to the microsome membrane. The protein resides in the endoplasmic reticulum membrane. Its subcellular location is the nucleus envelope. Its function is as follows. Required for nuclear import of FGF1. The polypeptide is Leucine-rich repeat-containing protein 59 (lrrc59) (Xenopus laevis (African clawed frog)).